The chain runs to 125 residues: Desulfoferrodoxin homolog (125 aa).

Fe cation contacts are provided by C10, C13, C29, C30, H49, H69, H75, C116, and H119.

It belongs to the desulfoferrodoxin family. Requires Fe(3+) as cofactor. Cu(2+) serves as cofactor.

The protein is Desulfoferrodoxin homolog of Archaeoglobus fulgidus (strain ATCC 49558 / DSM 4304 / JCM 9628 / NBRC 100126 / VC-16).